A 171-amino-acid polypeptide reads, in one-letter code: Putative auxin-responsive protein IAA29 (171 aa).

Residues 19–114 (SRFVKVFMHG…TVKKIYIVPA (96 aa)) form the PB1 domain. Residues 117–171 (QNENDYQEEEEDNAAAAATADEDGDGAAADDGVAAAADDVDDVAGYTSNDDPSFD) are disordered. Residues 142 to 153 (GAAADDGVAAAA) are compositionally biased toward low complexity. Over residues 162-171 (YTSNDDPSFD) the composition is skewed to polar residues.

Belongs to the Aux/IAA family. As to quaternary structure, homodimers and heterodimers.

It is found in the nucleus. In terms of biological role, aux/IAA proteins are short-lived transcriptional factors that function as repressors of early auxin response genes at low auxin concentrations. In Oryza sativa subsp. japonica (Rice), this protein is Putative auxin-responsive protein IAA29 (IAA29).